Here is a 556-residue protein sequence, read N- to C-terminus: ATP synthase subunit alpha 2 (556 aa).

177–184 lines the ATP pocket; the sequence is GDRATGKT. A disordered region spans residues 514–556; the sequence is GGHAEDAADDMGGALDGEHASGDATSIAPTPPGGAEAGAPRKR. Low complexity predominate over residues 546–556; the sequence is GGAEAGAPRKR.

The protein belongs to the ATPase alpha/beta chains family. In terms of assembly, F-type ATPases have 2 components, CF(1) - the catalytic core - and CF(0) - the membrane proton channel. CF(1) has five subunits: alpha(3), beta(3), gamma(1), delta(1), epsilon(1). CF(0) has three main subunits: a(1), b(2) and c(9-12). The alpha and beta chains form an alternating ring which encloses part of the gamma chain. CF(1) is attached to CF(0) by a central stalk formed by the gamma and epsilon chains, while a peripheral stalk is formed by the delta and b chains.

Its subcellular location is the cell inner membrane. It carries out the reaction ATP + H2O + 4 H(+)(in) = ADP + phosphate + 5 H(+)(out). In terms of biological role, produces ATP from ADP in the presence of a proton gradient across the membrane. The alpha chain is a regulatory subunit. The protein is ATP synthase subunit alpha 2 of Burkholderia thailandensis (strain ATCC 700388 / DSM 13276 / CCUG 48851 / CIP 106301 / E264).